A 304-amino-acid chain; its full sequence is Protoheme IX farnesyltransferase (304 aa).

The next 9 membrane-spanning stretches (helical) occupy residues 31–51 (VNTLIVFCAVIGMFLAVPDGL), 58–78 (VAATLGIAFVAGAAAAMNCLI), 99–119 (LAPAETLLFAGVLGGTGLTVL), 126–146 (LTMWLTLATFVGYAVVYTVLL), 154–174 (IVIGGASGAMPPVLGWAAVTG), 180–200 (ALLLFLIIFAWTPPHFWALAL), 222–242 (FTRLSVLLYTCILFGVTLLPF), 243–263 (ATRMSGPLYLVCAVALGIGFL), and 284–304 (FSILYLFLLFAALLMDHYLPL).

It belongs to the UbiA prenyltransferase family. Protoheme IX farnesyltransferase subfamily.

The protein localises to the cell inner membrane. The enzyme catalyses heme b + (2E,6E)-farnesyl diphosphate + H2O = Fe(II)-heme o + diphosphate. The protein operates within porphyrin-containing compound metabolism; heme O biosynthesis; heme O from protoheme: step 1/1. Functionally, converts heme B (protoheme IX) to heme O by substitution of the vinyl group on carbon 2 of heme B porphyrin ring with a hydroxyethyl farnesyl side group. This chain is Protoheme IX farnesyltransferase, found in Aromatoleum aromaticum (strain DSM 19018 / LMG 30748 / EbN1) (Azoarcus sp. (strain EbN1)).